The following is a 402-amino-acid chain: UDP-glucose 6-dehydrogenase (402 aa).

Residues 2–19 (KIAV…GVLL), Val-11, Asp-29, Lys-34, Thr-83, Thr-118, and Glu-145 contribute to the NAD(+) site. Substrate is bound by residues 141 to 145 (EFLRE), Lys-204, Asn-208, 249 to 253 (YNNPS), and Gly-257. Tyr-259 serves as a coordination point for NAD(+). Cys-260 (nucleophile) is an active-site residue. Residue Lys-263 coordinates NAD(+). Lys-320 is a substrate binding site. Residue Arg-327 participates in NAD(+) binding.

It belongs to the UDP-glucose/GDP-mannose dehydrogenase family.

It catalyses the reaction UDP-alpha-D-glucose + 2 NAD(+) + H2O = UDP-alpha-D-glucuronate + 2 NADH + 3 H(+). The protein operates within nucleotide-sugar biosynthesis; UDP-alpha-D-glucuronate biosynthesis; UDP-alpha-D-glucuronate from UDP-alpha-D-glucose: step 1/1. Catalyzes the formation of UDP-glucuronic acid which is required for capsular hyaluronic acid synthesis. The protein is UDP-glucose 6-dehydrogenase (hasB) of Streptococcus pyogenes serotype M18 (strain MGAS8232).